The chain runs to 595 residues: Beta-(1--&gt;2)glucan export ATP-binding/permease protein NdvA (595 aa).

The 281-residue stretch at 21 to 301 folds into the ABC transmembrane type-1 domain; that stretch reads SLLICSANVM…MSNFINLTIS (281 aa). Helical transmembrane passes span 22-42, 55-75, 129-149, 152-172, and 248-268; these read LLIC…PILF, IIPT…AYVL, IWLD…VLIP, FNMN…YVLI, and MAST…VAKG. One can recognise an ABC transporter domain in the interval 335-569; the sequence is IQFHHVTYKF…GGRFYKLLKA (235 aa). 368–375 is an ATP binding site; it reads GPTGAGKT.

Belongs to the ABC transporter superfamily. Beta-(1--&gt;2)glucan exporter (TC 3.A.1.108.1) family. In terms of assembly, homodimer.

Its subcellular location is the cell inner membrane. It catalyses the reaction [(1-&gt;2)-beta-D-glucosyl](n)(in) + ATP + H2O = [(1-&gt;2)-beta-D-glucosyl](n)(out) + ADP + phosphate + H(+). In terms of biological role, involved in beta-(1--&gt;2)glucan export. Transmembrane domains (TMD) form a pore in the inner membrane and the ATP-binding domain (NBD) is responsible for energy generation. This chain is Beta-(1--&gt;2)glucan export ATP-binding/permease protein NdvA, found in Bartonella henselae (strain ATCC 49882 / DSM 28221 / CCUG 30454 / Houston 1) (Rochalimaea henselae).